Reading from the N-terminus, the 729-residue chain is Fatty acid oxidation complex subunit alpha (729 aa).

The tract at residues 1–189 (MLYKGDTLYL…KIGLVDGVVK (189 aa)) is enoyl-CoA hydratase/isomerase. D296 contributes to the substrate binding site. The interval 311–729 (ETPKQAAVLG…ARPVGDLKTA (419 aa)) is 3-hydroxyacyl-CoA dehydrogenase. Residues M324, D343, 400 to 402 (VVE), K407, and S429 contribute to the NAD(+) site. Catalysis depends on H450, which acts as the For 3-hydroxyacyl-CoA dehydrogenase activity. NAD(+) is bound at residue N453. 2 residues coordinate substrate: N500 and Y660. Residues 708 to 729 (RHNEPYYPPVEPARPVGDLKTA) are disordered.

This sequence in the N-terminal section; belongs to the enoyl-CoA hydratase/isomerase family. It in the C-terminal section; belongs to the 3-hydroxyacyl-CoA dehydrogenase family. In terms of assembly, heterotetramer of two alpha chains (FadB) and two beta chains (FadA).

It catalyses the reaction a (3S)-3-hydroxyacyl-CoA + NAD(+) = a 3-oxoacyl-CoA + NADH + H(+). It carries out the reaction a (3S)-3-hydroxyacyl-CoA = a (2E)-enoyl-CoA + H2O. The enzyme catalyses a 4-saturated-(3S)-3-hydroxyacyl-CoA = a (3E)-enoyl-CoA + H2O. The catalysed reaction is (3S)-3-hydroxybutanoyl-CoA = (3R)-3-hydroxybutanoyl-CoA. It catalyses the reaction a (3Z)-enoyl-CoA = a 4-saturated (2E)-enoyl-CoA. It carries out the reaction a (3E)-enoyl-CoA = a 4-saturated (2E)-enoyl-CoA. It functions in the pathway lipid metabolism; fatty acid beta-oxidation. Its function is as follows. Involved in the aerobic and anaerobic degradation of long-chain fatty acids via beta-oxidation cycle. Catalyzes the formation of 3-oxoacyl-CoA from enoyl-CoA via L-3-hydroxyacyl-CoA. It can also use D-3-hydroxyacyl-CoA and cis-3-enoyl-CoA as substrate. This is Fatty acid oxidation complex subunit alpha from Escherichia coli O6:H1 (strain CFT073 / ATCC 700928 / UPEC).